We begin with the raw amino-acid sequence, 117 residues long: DNA-binding protein MK1619 (117 aa).

It belongs to the PDCD5 family.

This Methanopyrus kandleri (strain AV19 / DSM 6324 / JCM 9639 / NBRC 100938) protein is DNA-binding protein MK1619.